Reading from the N-terminus, the 711-residue chain is Arginine decarboxylase 2 (711 aa).

Lysine 147 is modified (N6-(pyridoxal phosphate)lysine). 331–341 (IDIGGGLGIDY) lines the substrate pocket. The segment at 642 to 661 (MHTKGGSEGENEEEEEDDEF) is disordered. Acidic residues predominate over residues 650–661 (GENEEEEEDDEF).

This sequence belongs to the Orn/Lys/Arg decarboxylase class-II family. SpeA subfamily. In terms of assembly, homodimer and heterodimer with ADC1. It depends on pyridoxal 5'-phosphate as a cofactor. Requires Mg(2+) as cofactor.

It is found in the plastid. It localises to the chloroplast. The protein resides in the cytoplasm. Its subcellular location is the cytosol. The catalysed reaction is L-arginine + H(+) = agmatine + CO2. Its pathway is amine and polyamine biosynthesis; agmatine biosynthesis; agmatine from L-arginine: step 1/1. Functionally, required for the biosynthesis of putrescine. Catalyzes the first step of polyamine (PA) biosynthesis to produce putrescine from arginine. Is a major contributor to basal arginine decarboxylase (ADC) activity and putrescine biosynthesis. Accumulation of putrescine plays a positive role in salt stress tolerance. Accumulation of putrescine plays a positive role in freezing tolerance. Production of PA is essential for normal seed development. Controls PA homeostasis which is crucial for normal plant growth and development. This Arabidopsis thaliana (Mouse-ear cress) protein is Arginine decarboxylase 2.